The chain runs to 316 residues: Biotin synthase (316 aa).

Residues 36–264 (FDNRITLCAI…TATLRICGGR (229 aa)) form the Radical SAM core domain. Cys-53, Cys-57, and Cys-60 together coordinate [4Fe-4S] cluster. [2Fe-2S] cluster contacts are provided by Cys-129, Cys-189, and Arg-259.

It belongs to the radical SAM superfamily. Biotin synthase family. Homodimer. [4Fe-4S] cluster serves as cofactor. It depends on [2Fe-2S] cluster as a cofactor.

It carries out the reaction (4R,5S)-dethiobiotin + (sulfur carrier)-SH + 2 reduced [2Fe-2S]-[ferredoxin] + 2 S-adenosyl-L-methionine = (sulfur carrier)-H + biotin + 2 5'-deoxyadenosine + 2 L-methionine + 2 oxidized [2Fe-2S]-[ferredoxin]. The protein operates within cofactor biosynthesis; biotin biosynthesis; biotin from 7,8-diaminononanoate: step 2/2. Functionally, catalyzes the conversion of dethiobiotin (DTB) to biotin by the insertion of a sulfur atom into dethiobiotin via a radical-based mechanism. In Desulfovibrio desulfuricans (strain ATCC 27774 / DSM 6949 / MB), this protein is Biotin synthase.